Reading from the N-terminus, the 976-residue chain is 3-O-beta-L-arabinopyranosyl-alpha-L-arabinofuranosidase (976 aa).

The first 28 residues, 1–28 (MSHRNKALVAIVAGTALLISSGAAIGQA), serve as a signal peptide directing secretion. E190 serves as the catalytic Proton donor. Residue E315 is the Nucleophile of the active site. The 136-residue stretch at 519 to 654 (LLVEEVENTV…DNTLDKFLLY (136 aa)) folds into the CBM6 domain.

The protein belongs to the glycosyl hydrolase 39 family.

The protein localises to the secreted. The enzyme catalyses Hydrolysis of beta-L-Arap-(1-&gt;3)-L-Araf disaccharides from non-reducing terminals in branches of type II arabinogalactan attached to proteins.. Its function is as follows. Hydrolase involved in the degradation of the gum arabic arabinogalactan protein (AGP) and larch AGP. Catalyzes the release of 3-O-beta-L-arabinopyranosyl-L-arabinose (beta-L-Arap-(1-&gt;3)-L-Ara) from gum arabic AGP and larch AGP. Also cleaves a small amount of beta-L-Arap-(1-&gt;3)-L-Ara from sugar beet arabinan, but wheat AGP cannot be used as a substrate. Can also release 3-O-alpha-D-galactopyranosyl-L-arabinose (alpha-D-Galp-(1-&gt;3)-L-Ara) from gum arabic AGP, with low efficiency. This is 3-O-beta-L-arabinopyranosyl-alpha-L-arabinofuranosidase from Bifidobacterium pseudocatenulatum.